We begin with the raw amino-acid sequence, 313 residues long: Olfactory receptor 4E2 (313 aa).

Topologically, residues 1–25 are extracellular; it reads MDSLNQTRVTEFVFLGLTDNRVLEM. N-linked (GlcNAc...) asparagine glycosylation is present at N5. The helical transmembrane segment at 26–49 threads the bilayer; sequence LFFMAFSAIYMLTLSGNILIIIAT. At 50 to 57 the chain is on the cytoplasmic side; sequence VFTPSLHT. A helical transmembrane segment spans residues 58 to 79; sequence PMYFFLSNLSFIDICHSSVTVP. The Extracellular portion of the chain corresponds to 80–100; the sequence is KMLEGLLLERKTISFDNCITQ. C97 and C179 are disulfide-bonded. The helical transmembrane segment at 101–120 threads the bilayer; sequence LFFLHLFACAEIFLLIIVAY. Cu cation contacts are provided by H105 and C109. The Cytoplasmic segment spans residues 121 to 139; the sequence is DRYVAICTPLHYPNVMNMR. A helical transmembrane segment spans residues 140–158; the sequence is VCIQLVFALWLGGTVHSLG. Over 159-195 the chain is Extracellular; it reads QTFLTIRLPYCGPNIIDSYFCDVPLVIKLACTDTYLT. Residues 196-219 form a helical membrane-spanning segment; it reads GILIVTNSGTISLSCFLAVVTSYM. At 220–235 the chain is on the cytoplasmic side; the sequence is VILVSLRKHSAEGRQK. Residues 236-258 form a helical membrane-spanning segment; sequence ALSTCSAHFMVVALFFGPCIFIY. Residues 259–269 are Extracellular-facing; the sequence is TRPDTSFSIDK. R260 is a Cu cation binding site. A helical transmembrane segment spans residues 270–289; that stretch reads VVSVFYTVVTPLLNPFIYTL. Residues 290-313 lie on the Cytoplasmic side of the membrane; the sequence is RNEEVKSAMKQLRQRQVFFTKSYT.

The protein belongs to the G-protein coupled receptor 1 family.

It localises to the cell membrane. Its activity is regulated as follows. Copper binding enhances receptor activity in response to odorant binding. In terms of biological role, olfactory receptor that is activated by the binding of organosulfur odorants with thioether groups such as (methylthio)methanethiol (MTMT) and bis(methylthiomethyl) disulfide. Also binds odorants cis-cyclooctene and tert-butyl mercaptan. The activity of this receptor is mediated by G proteins which activate adenylyl cyclase. This Homo sapiens (Human) protein is Olfactory receptor 4E2.